A 242-amino-acid polypeptide reads, in one-letter code: Small ribosomal subunit protein uS2 (242 aa).

It belongs to the universal ribosomal protein uS2 family.

The sequence is that of Small ribosomal subunit protein uS2 from Photobacterium profundum (strain SS9).